Reading from the N-terminus, the 640-residue chain is WW domain-binding protein 11 (640 aa).

Residues 1 to 11 (MGRRSTSSTKS) are compositionally biased toward polar residues. The interval 1–37 (MGRRSTSSTKSGKFMNPTDQARKEARKRELKKNKKQR) is disordered. Residues 28-37 (RELKKNKKQR) are compositionally biased toward basic residues. Residues 75–122 (EKVLRDKRKKLRETFERIVRLYERENPETYKELRKLELEYETKRGQLS) adopt a coiled-coil conformation. Disordered regions lie at residues 155 to 174 (DIPL…SALG), 187 to 563 (VPRL…ISAK), and 582 to 625 (RVRR…LKTK). The span at 194-207 (RKPPGPPPGPPPPQ) shows a compositional bias: pro residues. Residues 230–240 (DGGRDSDSKSE) show a composition bias toward basic and acidic residues. Positions 241–251 (ADEESDSQEDS) are enriched in acidic residues. The span at 252–274 (SAEREDSDRGERDEERERADKHT) shows a compositional bias: basic and acidic residues. Phosphoserine is present on Ser285. Acidic residues predominate over residues 315–338 (PEEEEEDEEEEYSESEDSEAEDQA). A compositionally biased stretch (low complexity) spans 356–371 (APMAAQQPPSLMQAPP). 2 stretches are compositionally biased toward pro residues: residues 372-412 (ITGP…PPGL) and 422-491 (RLLP…PPLN). Positions 421-432 (PRLLPPGPPPGR) match the PGR motif. Residues 547-558 (GSGGASAQGGGA) show a composition bias toward gly residues. The span at 586–599 (DRAGGTGRREEERP) shows a compositional bias: basic and acidic residues. Over residues 603–616 (QQTPAHQAPPIAHA) the composition is skewed to low complexity.

Its subcellular location is the cytoplasm. It localises to the nucleus. Its function is as follows. Activates pre-mRNA splicing. This Danio rerio (Zebrafish) protein is WW domain-binding protein 11 (wbp11).